Here is a 191-residue protein sequence, read N- to C-terminus: UPF0312 protein SO_3370 (191 aa).

A signal peptide spans 1 to 22 (MKKQLFSALIGASLFAPMAVSA).

The protein belongs to the UPF0312 family. Type 1 subfamily.

It localises to the periplasm. The protein is UPF0312 protein SO_3370 of Shewanella oneidensis (strain ATCC 700550 / JCM 31522 / CIP 106686 / LMG 19005 / NCIMB 14063 / MR-1).